A 176-amino-acid chain; its full sequence is MKLNDLRDNEGARKGRIRVGRGIGSGKGKTGGRGQKGQKSRSGVAIKGFEGGQMPLHMRLPKRGFNNPFGKDFAEVNIGMVQKFIDAKKLDGKKDITEEALREAGLVRGGKDGVRLLGKGELKAKVKFIVAGASKGAVEAVEKAGGSVEVIPAAQPEHEKKAARSEANKKAKAKAE.

A compositionally biased stretch (basic and acidic residues) spans 1 to 13; that stretch reads MKLNDLRDNEGAR. 2 disordered regions span residues 1-48 and 151-176; these read MKLN…AIKG and IPAA…AKAE. Over residues 21 to 35 the composition is skewed to gly residues; that stretch reads RGIGSGKGKTGGRGQ. Basic and acidic residues predominate over residues 156 to 176; it reads PEHEKKAARSEANKKAKAKAE.

Belongs to the universal ribosomal protein uL15 family. As to quaternary structure, part of the 50S ribosomal subunit.

Binds to the 23S rRNA. The polypeptide is Large ribosomal subunit protein uL15 (Erythrobacter litoralis (strain HTCC2594)).